A 797-amino-acid chain; its full sequence is Protocadherin beta-9 (797 aa).

The first 26 residues, 1–26, serve as a signal peptide directing secretion; sequence MKTRGFSFPRQRQVLFLFLFWGVSLA. Topologically, residues 27 to 690 are extracellular; that stretch reads GSGFGRYSVT…AQADLLTVYL (664 aa). Cadherin domains lie at 35–133, 138–242, 247–347, 352–451, and 456–561; these read VTEE…SPVF, MVLK…VPQF, YETQ…PPEL, LSNS…APAF, and YTLF…SPFV. Asn-169 carries N-linked (GlcNAc...) asparagine glycosylation. A glycan (N-linked (GlcNAc...) asparagine) is linked at Asn-418. A glycan (N-linked (GlcNAc...) asparagine) is linked at Asn-567. The region spanning 568 to 671 is the Cadherin 6 domain; that stretch reads GSAPCTELVP…LVDGFSQPYL (104 aa). A helical membrane pass occupies residues 691–711; it reads VVALASVSSLFLLSVLLFVAV. The Cytoplasmic portion of the chain corresponds to 712–797; sequence RLCRRSRAAS…TLPNSFGFNY (86 aa). Positions 777 to 797 are disordered; sequence HRGGKEIEENSTLPNSFGFNY. The segment covering 786-797 has biased composition (polar residues); that stretch reads NSTLPNSFGFNY.

The protein resides in the cell membrane. In terms of biological role, potential calcium-dependent cell-adhesion protein. May be involved in the establishment and maintenance of specific neuronal connections in the brain. This Homo sapiens (Human) protein is Protocadherin beta-9 (PCDHB9).